The sequence spans 670 residues: DUF724 domain-containing protein 1 (670 aa).

Disordered regions lie at residues 283-315 (HNGPQQKPVKESPSNAIKQKPMCSSSGARPMTP) and 368-445 (ANAE…NNDD). Composition is skewed to polar residues over residues 294–309 (SPSNAIKQKPMCSSSG), 379–392 (RNQNCLRNDSTQQM), and 426–442 (CNGSESEISNTGKSICN). Residues 484–669 (PFAKKLPFWK…LEFQTTVSTP (186 aa)) enclose the DUF724 domain.

Expressed in stems and flowers.

Its subcellular location is the nucleus. May be involved in the polar growth of plant cells via transportation of RNAs. In Arabidopsis thaliana (Mouse-ear cress), this protein is DUF724 domain-containing protein 1.